The primary structure comprises 115 residues: Large ribosomal subunit protein bL20 (115 aa).

It belongs to the bacterial ribosomal protein bL20 family.

Binds directly to 23S ribosomal RNA and is necessary for the in vitro assembly process of the 50S ribosomal subunit. It is not involved in the protein synthesizing functions of that subunit. This Prochlorococcus marinus subsp. pastoris (strain CCMP1986 / NIES-2087 / MED4) protein is Large ribosomal subunit protein bL20.